A 163-amino-acid chain; its full sequence is MAVGGFEMRIGNGYDFHRLVEGRRLILGGVEIPYRLGLLGHSDADLLTHAITDALLGAACLGDIGRHFPPGDPQWQDVSSLLLLSKVLELVRGRGLRLSNVDAVVVAERPKLAPHIPAIRQSLAGALGLPLDRLSVKATTNEGLGPVGEGLAMACHAVVLLEE.

A divalent metal cation is bound by residues Asp-15 and His-17. Residues 15-17 and 41-42 contribute to the 4-CDP-2-C-methyl-D-erythritol 2-phosphate site; these read DFH and HS. His-49 is a binding site for a divalent metal cation. Residues 63–65 and 139–142 each bind 4-CDP-2-C-methyl-D-erythritol 2-phosphate; these read DIG and TTNE.

Belongs to the IspF family. In terms of assembly, homotrimer. A divalent metal cation serves as cofactor.

The enzyme catalyses 4-CDP-2-C-methyl-D-erythritol 2-phosphate = 2-C-methyl-D-erythritol 2,4-cyclic diphosphate + CMP. It participates in isoprenoid biosynthesis; isopentenyl diphosphate biosynthesis via DXP pathway; isopentenyl diphosphate from 1-deoxy-D-xylulose 5-phosphate: step 4/6. Functionally, involved in the biosynthesis of isopentenyl diphosphate (IPP) and dimethylallyl diphosphate (DMAPP), two major building blocks of isoprenoid compounds. Catalyzes the conversion of 4-diphosphocytidyl-2-C-methyl-D-erythritol 2-phosphate (CDP-ME2P) to 2-C-methyl-D-erythritol 2,4-cyclodiphosphate (ME-CPP) with a corresponding release of cytidine 5-monophosphate (CMP). The sequence is that of 2-C-methyl-D-erythritol 2,4-cyclodiphosphate synthase from Gloeobacter violaceus (strain ATCC 29082 / PCC 7421).